The primary structure comprises 473 residues: UDP-glycosyltransferase 71A27 (473 aa).

Catalysis depends on H15, which acts as the Proton acceptor. H15 lines the an anthocyanidin pocket. D117 serves as the catalytic Charge relay. UDP-alpha-D-glucose-binding residues include A345, Q347, H362, W365, N366, S367, and E370. Position 385 (G385) interacts with an anthocyanidin. The UDP-alpha-D-glucose site is built by E386 and Q387.

It belongs to the UDP-glycosyltransferase family.

It carries out the reaction (20S)-protopanaxadiol + UDP-alpha-D-glucose = (20S)-ginsenoside C-K + UDP + H(+). It functions in the pathway secondary metabolite biosynthesis; terpenoid biosynthesis. Component of the triterpene saponins (e.g. PPD-type ginsenosides or panaxosides) biosynthetic pathways. Glycosyltransferase that catalyzes the biosynthesis of compound K from protopanaxadiol (PPD). The polypeptide is UDP-glycosyltransferase 71A27 (Panax ginseng (Korean ginseng)).